The following is a 43-amino-acid chain: MWWRFPNLRNNSKYIKNKEEQLLDNQKDNHEFISQSRKRINFD.

This is an uncharacterized protein from Dictyostelium discoideum (Social amoeba).